Here is an 8797-residue protein sequence, read N- to C-terminus: Nesprin-1 (8797 aa).

Positions 1–289 (MATSRGASRC…KHYPDIHNAS (289 aa)) are actin-binding. The Cytoplasmic segment spans residues 1 to 8746 (MATSRGASRC…GRGFLFRVLR (8746 aa)). Calponin-homology (CH) domains are found at residues 27-134 (IVQK…LYFQ) and 178-283 (GNAK…KHYP). Spectrin repeat units lie at residues 314-397 (REDR…SRLF), 398-502 (DWHI…HLMK), 503-609 (MEFL…SMLE), 610-703 (EVIS…YAQA), 704-815 (DEMD…QLLI), 816-923 (PLEE…KHVE), 924-1024 (TNSR…HLKI), 1025-1122 (DVEK…LMED), 1123-1246 (PDKW…NSLE), 1247-1335 (ELIS…ERRI), 1336-1444 (QVTL…MEMV), 1445-1550 (KTKW…ILGH), 1551-1653 (LSQQ…LENL), 1654-1763 (LAHW…LQSV), 1764-1879 (VAEH…SHAS), 1880-1976 (LSGI…ADAL), 1977-2081 (AVLK…QGQC), 2082-2195 (CGLI…LRVS), 2196-2303 (LSIW…KDFT), 2304-2401 (AQST…KTQA), 2402-2513 (SLQE…LQDC), 2514-2619 (ASEL…LRSC), 2620-2731 (QVAL…LESV), 2732-2838 (ISQW…VEEI), 2839-2962 (VKDH…SGQV), 2963-3062 (AQLE…QNKE), 3063-3171 (QILQ…LENL), 3172-3275 (KIQM…VSRL), 3276-3387 (DRIV…LEGA), 3388-3490 (LSKW…SEKL), 3491-3593 (VRLH…RTQF), 3594-3720 (NNVV…YSDW), 3721-3814 (YGST…LEKG), 3815-3920 (LHLA…LEAK), 3921-4028 (VKDH…QRMY), 4029-4139 (QSLE…KHLK), 4140-4235 (SELW…REED), 4236-4339 (LQRT…IQVS), 4340-4451 (VTNL…LNKA), 4452-4560 (LSEK…LEKN), 4561-4669 (LVSR…VQEA), 4670-4776 (ILAR…LEDT), 4777-4882 (TSAY…CESR), 4883-4991 (MVQS…LTEI), 4992-5099 (YSQC…LQRC), 5100-5209 (TAQW…LEDA), 5210-5318 (VDEW…GKLV), 5319-5424 (KQEL…EQSK), 5425-5522 (ATSQ…LSKL), 5523-5630 (NQAA…LQDA), 5631-5736 (AKDM…MQEA), and 5737-5842 (VVQY…PSAH). Residues 314-8666 (REDRVIFKEM…EKLLDVSSSQ (8353 aa)) are a coiled coil. Ser732 is subject to Phosphoserine. Thr2270 bears the Phosphothreonine mark. Residue Ser5657 is modified to Phosphoserine. The disordered stretch occupies residues 5859 to 5886 (PVTEESGEEGTNSEISSPPACRSPSPVA). Spectrin repeat units lie at residues 5962–6071 (LERQ…LEEK), 6072–6178 (LNDQ…SLLE), 6374–6485 (RQSI…RLQQ), 6486–6581 (ILNF…RSGL), 6582–6691 (NQNL…LETW), 6692–6795 (SHLD…TILK), 6796–6902 (HWTR…QEKL), 6903–7020 (HQLQ…LEGL), 7021–7128 (LESW…LKSV), 7129–7237 (LDQW…SKAL), 7238–7350 (LQLW…LQAG), 7351–7454 (VLDY…LQSF), 7455–7558 (LLQH…RGII), 7559–7671 (DSQI…LAFL), 7672–7783 (LKDW…NEWA), 7784–7883 (VFSE…LKET), 7884–7997 (LVAV…IEET), 7998–8106 (WRLW…LKHF), and 8107–8216 (IGQR…LPLP). Ser8223 carries the phosphoserine modification. A disordered region spans residues 8246 to 8279 (DSLLSPQPSSNLSLSLAQPLRSERSGRDTPASVD). The span at 8247-8265 (SLLSPQPSSNLSLSLAQPL) shows a compositional bias: low complexity. At Thr8274 the chain carries Phosphothreonine. 3 positions are modified to phosphoserine: Ser8277, Ser8280, and Ser8305. Spectrin repeat units lie at residues 8329 to 8438 (SALE…MKQN), 8439 to 8548 (LQKW…LQDA), and 8549 to 8666 (LMQC…SSSQ). Thr8360 carries the post-translational modification Phosphothreonine. The interval 8671–8734 (SWSSADELDT…DSSLSEPGPG (64 aa)) is disordered. Polar residues-rich tracts occupy residues 8680 to 8696 (TSGS…PNRQ) and 8704 to 8729 (SLSQ…SSLS). The KASH domain occupies 8738–8797 (RGFLFRVLRAALPLQLLLLLLIGLACLVPMSEEDYSCALSNNFARSFHPMLRYTNGPPPL). Residues 8747–8767 (AALPLQLLLLLLIGLACLVPM) traverse the membrane as a helical; Anchor for type IV membrane protein segment. The Perinuclear space portion of the chain corresponds to 8768 to 8797 (SEEDYSCALSNNFARSFHPMLRYTNGPPPL).

This sequence belongs to the nesprin family. Core component of LINC complexes which are composed of inner nuclear membrane SUN domain-containing proteins coupled to outer nuclear membrane KASH domain-containing nesprins. SUN and KASH domain-containing proteins seem to bind each other promiscuously; however, differentially expression of LINC complex constituents can give rise to specific assemblies. At least SUN1/2-containing core LINC complexes are proposed to be hexameric composed of three protomers of each KASH and SUN domain-containing protein. The SUN2:SYNE1/KASH1 LINC complex is a heterohexamer; the homotrimeric cloverleave-like conformation of the SUN domain is a prerequisite for LINC complex formation in which three separate SYNE1/KASH1 peptides bind at the interface of adjacent SUN domains. Self-associates. Interacts with SYNE3. Interacts with SPAG4/SUN4. May interact with MUSK. Interacts with F-actin via its N-terminal domain. Interacts with EMD and LMNA in vitro. Interacts (via KASH domain) with TMEM258. The disulfid bond with SUN1 or SUN2 is required for stability of the respective LINC complex under tensile forces. As to expression, expressed in HeLa, A431, A172 and HaCaT cells (at protein level). Widely expressed. Highly expressed in skeletal and smooth muscles, heart, spleen, peripheral blood leukocytes, pancreas, cerebellum, stomach, kidney and placenta. Isoform GSRP-56 is predominantly expressed in heart and skeletal muscle (at protein level).

The protein resides in the nucleus outer membrane. It is found in the nucleus. The protein localises to the nucleus envelope. Its subcellular location is the cytoplasm. It localises to the cytoskeleton. The protein resides in the myofibril. It is found in the sarcomere. The protein localises to the golgi apparatus. In terms of biological role, multi-isomeric modular protein which forms a linking network between organelles and the actin cytoskeleton to maintain the subcellular spatial organization. As a component of the LINC (LInker of Nucleoskeleton and Cytoskeleton) complex involved in the connection between the nuclear lamina and the cytoskeleton. The nucleocytoplasmic interactions established by the LINC complex play an important role in the transmission of mechanical forces across the nuclear envelope and in nuclear movement and positioning. May be involved in nucleus-centrosome attachment and nuclear migration in neural progenitors implicating LINC complex association with SUN1/2 and probably association with cytoplasmic dynein-dynactin motor complexes; SYNE1 and SYNE2 may act redundantly. Required for centrosome migration to the apical cell surface during early ciliogenesis. May be involved in nuclear remodeling during sperm head formation in spermatogenesis; a probable SUN3:SYNE1/KASH1 LINC complex may tether spermatid nuclei to posterior cytoskeletal structures such as the manchette. This Homo sapiens (Human) protein is Nesprin-1.